The chain runs to 230 residues: Cell division ATP-binding protein FtsE (230 aa).

One can recognise an ABC transporter domain in the interval 3 to 228 (ITLDHVTKQY…RDEQRGVYGM (226 aa)). 37 to 44 (GPSGSGKS) lines the ATP pocket.

It belongs to the ABC transporter superfamily. In terms of assembly, homodimer. Forms a membrane-associated complex with FtsX.

It localises to the cell membrane. Functionally, part of the ABC transporter FtsEX involved in cellular division. Has ATPase activity. In Mycobacterium tuberculosis (strain ATCC 25618 / H37Rv), this protein is Cell division ATP-binding protein FtsE.